The primary structure comprises 601 residues: Serine/threonine-protein phosphatase 2A 65 kDa regulatory subunit A beta isoform (601 aa).

N-acetylalanine is present on Ala-2. HEAT repeat units lie at residues 20–58, 59–96, 97–135, 136–173, 174–212, 213–251, 252–290, 291–333, 334–372, 373–411, 412–450, 451–489, 490–528, 529–567, and 568–601; these read DSLY…GVER, TRSE…GGPD, FAHC…TPVA, LEAY…ASNA, VKAE…ELDS, VKSE…SQDD, LETL…GPKI, TLND…RETI, IMNQ…GKEN, TIEH…GIRQ, LSQS…GVEF, FDEK…GTEW, AQNT…GQEI, TTKQ…DTNA, and LQGE…LALA.

It belongs to the phosphatase 2A regulatory subunit A family. PP2A consists of a common heterodimeric core enzyme, composed of a 36 kDa catalytic subunit (subunit C) and a 65 kDa constant regulatory subunit (PR65 or subunit A), that associates with a variety of regulatory subunits. Proteins that associate with the core dimer include three families of regulatory subunits B (the R2/B/PR55/B55, R3/B''/PR72/PR130/PR59 and R5/B'/B56 families), the 48 kDa variable regulatory subunit, viral proteins, and cell signaling molecules. Interacts with IPO9. Interacts with SGO1. Interacts with RAF1.

Its function is as follows. The PR65 subunit of protein phosphatase 2A serves as a scaffolding molecule to coordinate the assembly of the catalytic subunit and a variable regulatory B subunit. The chain is Serine/threonine-protein phosphatase 2A 65 kDa regulatory subunit A beta isoform (PPP2R1B) from Homo sapiens (Human).